The chain runs to 281 residues: MDTIVLDQRGEVFSFFRSLDMLCYAIIAQQYFQDPTVLLLLLKVFVQLSYLTPKPFSQLNALPLFYPLLLNFLISLMVRMFFNLPTAGESLDGYLYGGSIINFIGEKNESSRIDFITSDLVLFCLQIFMALILIASNKRPTQASHIQASQSGLSNVDGDEEPSDLITEDSRDTQQGQRQEDLQRQLENERSRLIARFSHSLYSFQHGLSFGSPQNRNTPLQRQSADSYSTPVCIEVDSEDWKDLVWKSQYATENANTNSINNSPLSSNTTGVPNSVLTNPI.

The next 4 helical transmembrane spans lie at 22 to 42 (LCYA…LLLL), 62 to 82 (LPLF…RMFF), 84 to 104 (LPTA…INFI), and 115 to 135 (FITS…ILIA). Residues 145–154 (HIQASQSGLS) show a composition bias toward polar residues. Disordered stretches follow at residues 145-183 (HIQA…EDLQ) and 256-281 (NTNS…TNPI). The segment covering 157–167 (DGDEEPSDLIT) has biased composition (acidic residues). Positions 168 to 183 (EDSRDTQQGQRQEDLQ) are enriched in basic and acidic residues.

As to quaternary structure, component of the DSC E3 ubiquitin ligase complex composed of dsc1, dsc2, dsc3 and dsc4.

It localises to the endoplasmic reticulum membrane. It is found in the golgi apparatus membrane. It functions in the pathway protein modification; protein ubiquitination. Its function is as follows. Component of the DSC E3 ubiquitin ligase complex which is required for the sre1 transcriptional activator proteolytic cleavage to release the soluble transcription factor from the membrane in low oxygen or sterol conditions. The complex also plays an important role in the multivesicular body (MVB) pathway and functions in a post-endoplasmic reticulum pathway for protein degradation. This Schizosaccharomyces pombe (strain 972 / ATCC 24843) (Fission yeast) protein is DSC E3 ubiquitin ligase complex subunit 4 (dsc4).